A 345-amino-acid polypeptide reads, in one-letter code: Eukaryotic translation initiation factor 3 subunit F (345 aa).

The MPN domain occupies 30–166 (VVIQPQAIFS…TRAYISAPVG (137 aa)). The interval 310 to 345 (EGASAEAGAQRGQRGGRGGRGGQQRTQERASEEVRA) is disordered. Positions 312–321 (ASAEAGAQRG) are enriched in low complexity. A compositionally biased stretch (gly residues) spans 322–331 (QRGGRGGRGG). Residues 335–345 (TQERASEEVRA) show a composition bias toward basic and acidic residues.

Belongs to the eIF-3 subunit F family. In terms of assembly, component of the eukaryotic translation initiation factor 3 (eIF-3) complex.

Its subcellular location is the cytoplasm. Functionally, component of the eukaryotic translation initiation factor 3 (eIF-3) complex, which is involved in protein synthesis of a specialized repertoire of mRNAs and, together with other initiation factors, stimulates binding of mRNA and methionyl-tRNAi to the 40S ribosome. The eIF-3 complex specifically targets and initiates translation of a subset of mRNAs involved in cell proliferation. The sequence is that of Eukaryotic translation initiation factor 3 subunit F from Neosartorya fischeri (strain ATCC 1020 / DSM 3700 / CBS 544.65 / FGSC A1164 / JCM 1740 / NRRL 181 / WB 181) (Aspergillus fischerianus).